The sequence spans 196 residues: Gastrula zinc finger protein XlCGF64.1 (196 aa).

7 consecutive C2H2-type zinc fingers follow at residues 6–28 (YECP…QRGH), 34–56 (FMCT…QFIH), 62–84 (YVCT…QRGH), 90–112 (FTCT…QFIH), 118–140 (YECT…QRGH), 146–168 (FMCT…QFIH), and 174–196 (LMCT…KLSH).

It belongs to the krueppel C2H2-type zinc-finger protein family.

Its subcellular location is the nucleus. In terms of biological role, may be involved in transcriptional regulation. This chain is Gastrula zinc finger protein XlCGF64.1, found in Xenopus laevis (African clawed frog).